The following is a 314-amino-acid chain: Putative S-adenosyl-L-methionine-dependent methyltransferase MAV_4441 (314 aa).

S-adenosyl-L-methionine is bound by residues Asp-138 and 167–168 (DL).

The protein belongs to the UPF0677 family.

Its function is as follows. Exhibits S-adenosyl-L-methionine-dependent methyltransferase activity. In Mycobacterium avium (strain 104), this protein is Putative S-adenosyl-L-methionine-dependent methyltransferase MAV_4441.